The following is a 145-amino-acid chain: Immune protein Tsi4 (145 aa).

A run of 2 helical transmembrane segments spans residues Ile9–Gly29 and Ala109–Phe129.

The protein resides in the membrane. Functionally, immunity protein that plays a role in preventing early activation of toxin Tse4. This Pseudomonas aeruginosa (strain ATCC 15692 / DSM 22644 / CIP 104116 / JCM 14847 / LMG 12228 / 1C / PRS 101 / PAO1) protein is Immune protein Tsi4.